Reading from the N-terminus, the 540-residue chain is Beta-glucosidase 1B (540 aa).

Substrate contacts are provided by Q25, H128, and N174. The active-site Proton donor is the E175. A substrate-binding site is contributed by Y316. Catalysis depends on E380, which acts as the Nucleophile. Substrate is bound by residues W430 and 437–438 (EW). Over residues 481-492 (PAAETKKAATPS) the composition is skewed to low complexity. Residues 481-524 (PAAETKKAATPSPLKPHGAISNGVSKKSSATKEPKSASRKKGRK) form a disordered region.

This sequence belongs to the glycosyl hydrolase 1 family.

The catalysed reaction is Hydrolysis of terminal, non-reducing beta-D-glucosyl residues with release of beta-D-glucose.. Functionally, plays an important role in cellulose degradation. Shows hydrolytic activity against several glycosidic compounds. The protein is Beta-glucosidase 1B of Phanerodontia chrysosporium (White-rot fungus).